Here is an 850-residue protein sequence, read N- to C-terminus: G-type lectin S-receptor-like serine/threonine-protein kinase CES101 (850 aa).

The first 22 residues, 1 to 22 (MWSNCIFLTLFTFYLFLGQSCC), serve as a signal peptide directing secretion. Residues 23-423 (QTDTLLQGQY…IKGSKLAATW (401 aa)) are Extracellular-facing. Residues 24 to 144 (TDTLLQGQYL…DSDGSMKRTL (121 aa)) form the Bulb-type lectin domain. N-linked (GlcNAc...) asparagine glycans are attached at residues Asn55, Asn118, Asn194, and Asn374. Positions 334–416 (CSRFGYTFRE…PRTIYIRIKG (83 aa)) constitute a PAN domain. Disulfide bonds link Cys367/Cys390 and Cys371/Cys377. A helical membrane pass occupies residues 424 to 444 (LVVVASLFLIIPVTWLIIYLV). Topologically, residues 445-850 (LRKFKIKGTN…RVTITVMEAR (406 aa)) are cytoplasmic. The Protein kinase domain occupies 527-816 (FSDANKLGEG…ALSLPKEPAF (290 aa)). ATP-binding positions include 533 to 541 (LGEGGFGPV) and Lys555. Ser561 bears the Phosphoserine mark. The tract at residues 616–633 (LRKIVLDWKLRFRIMEGI) is caM-binding. Asp652 functions as the Proton acceptor in the catalytic mechanism. Ser669 is subject to Phosphoserine. Residue Thr686 is modified to Phosphothreonine. Phosphoserine occurs at positions 730 and 838. Thr845 carries the phosphothreonine modification.

It belongs to the protein kinase superfamily. Ser/Thr protein kinase family. As to expression, mostly expressed in leaves, and, to a lower extent, in roots and flowers.

Its subcellular location is the cell membrane. The catalysed reaction is L-seryl-[protein] + ATP = O-phospho-L-seryl-[protein] + ADP + H(+). The enzyme catalyses L-threonyl-[protein] + ATP = O-phospho-L-threonyl-[protein] + ADP + H(+). In terms of biological role, promotes the expression of genes involved in photosynthesis at least in dedifferentiated calli. This is G-type lectin S-receptor-like serine/threonine-protein kinase CES101 (CES101) from Arabidopsis thaliana (Mouse-ear cress).